A 378-amino-acid chain; its full sequence is Dof zinc finger protein 1 (378 aa).

Residues 28 to 38 (GANPNPAATAP) show a composition bias toward low complexity. Residues 28-79 (GANPNPAATAPSSVTGGALRGGGGGGAPPVAGGAGAGSTERRARPQKEKALN) form a disordered region. Residues 45–63 (ALRGGGGGGAPPVAGGAGA) are compositionally biased toward gly residues. Positions 66-77 (TERRARPQKEKA) are enriched in basic and acidic residues. A Dof-type zinc finger spans residues 78 to 132 (LNCPRCNSTNTKFCYYNNYSLQQPRYFCKTCRRYWTEGGSLRNVPVGGGSRKNKR). Zn(2+) is bound by residues Cys-80, Cys-83, Cys-105, and Cys-108. Disordered stretches follow at residues 116–148 (GSLR…ASTA), 203–222 (SLES…NGRG), and 316–378 (LKPT…GTSW). Over residues 133-148 (SSSSAASASPASASTA) the composition is skewed to low complexity. 3 stretches are compositionally biased toward gly residues: residues 323-338 (GTGG…GVDG), 350-361 (AGGGGGGPGGHD), and 369-378 (MIGGGSGTSW).

It localises to the nucleus. Functionally, transcription factor that may transactivate seed storage protein genes in developing seeds. The sequence is that of Dof zinc finger protein 1 from Oryza sativa subsp. japonica (Rice).